The sequence spans 1571 residues: Pentafunctional AROM polypeptide (1571 aa).

A 3-dehydroquinate synthase region spans residues 1 to 380 (MTSVEKVSIL…YQLKAHQVSK (380 aa)). NAD(+) is bound by residues 43 to 45 (DTN), 81 to 84 (ENNK), 112 to 114 (GGV), and D117. R128 is a 7-phospho-2-dehydro-3-deoxy-D-arabino-heptonate binding site. Residue 137 to 138 (TS) coordinates NAD(+). Residues D144 and K150 each contribute to the 7-phospho-2-dehydro-3-deoxy-D-arabino-heptonate site. K159 is a binding site for NAD(+). N160 contributes to the 7-phospho-2-dehydro-3-deoxy-D-arabino-heptonate binding site. NAD(+) is bound by residues 177-180 (FLET) and N188. Residue E192 coordinates Zn(2+). Residues 192 to 195 (EVVK) and K244 contribute to the 7-phospho-2-dehydro-3-deoxy-D-arabino-heptonate site. The active-site Proton acceptor; for 3-dehydroquinate synthase activity is the E254. 7-phospho-2-dehydro-3-deoxy-D-arabino-heptonate-binding positions include 258 to 262 (RNLLN) and H265. Position 265 (H265) interacts with Zn(2+). H269 (proton acceptor; for 3-dehydroquinate synthase activity) is an active-site residue. Residues H281 and K352 each contribute to the 7-phospho-2-dehydro-3-deoxy-D-arabino-heptonate site. Zn(2+) is bound at residue H281. The EPSP synthase stretch occupies residues 393–843 (VHPFDDKLIP…WDILHTKFKV (451 aa)). The active-site For EPSP synthase activity is C825. The tract at residues 868–1058 (KRSIIVIGMR…IPKKRSFYTS (191 aa)) is shikimate kinase. Residue 875–882 (GMRGAGKS) coordinates ATP. Residues 1059–1271 (LTFSDLTEVA…GNEGALDVAQ (213 aa)) are 3-dehydroquinase. K1204 functions as the Schiff-base intermediate with substrate; for 3-dehydroquinate dehydratase activity in the catalytic mechanism. A shikimate dehydrogenase region spans residues 1284 to 1571 (EKHFWIVGNP…DVVHDAVVNQ (288 aa)).

The protein in the N-terminal section; belongs to the sugar phosphate cyclases superfamily. Dehydroquinate synthase family. In the 2nd section; belongs to the EPSP synthase family. This sequence in the 3rd section; belongs to the shikimate kinase family. It in the 4th section; belongs to the type-I 3-dehydroquinase family. The protein in the C-terminal section; belongs to the shikimate dehydrogenase family. As to quaternary structure, homodimer. It depends on Zn(2+) as a cofactor.

It localises to the cytoplasm. The catalysed reaction is 7-phospho-2-dehydro-3-deoxy-D-arabino-heptonate = 3-dehydroquinate + phosphate. It catalyses the reaction 3-dehydroquinate = 3-dehydroshikimate + H2O. The enzyme catalyses shikimate + NADP(+) = 3-dehydroshikimate + NADPH + H(+). It carries out the reaction shikimate + ATP = 3-phosphoshikimate + ADP + H(+). The catalysed reaction is 3-phosphoshikimate + phosphoenolpyruvate = 5-O-(1-carboxyvinyl)-3-phosphoshikimate + phosphate. Its pathway is metabolic intermediate biosynthesis; chorismate biosynthesis; chorismate from D-erythrose 4-phosphate and phosphoenolpyruvate: step 2/7. The protein operates within metabolic intermediate biosynthesis; chorismate biosynthesis; chorismate from D-erythrose 4-phosphate and phosphoenolpyruvate: step 3/7. It functions in the pathway metabolic intermediate biosynthesis; chorismate biosynthesis; chorismate from D-erythrose 4-phosphate and phosphoenolpyruvate: step 4/7. It participates in metabolic intermediate biosynthesis; chorismate biosynthesis; chorismate from D-erythrose 4-phosphate and phosphoenolpyruvate: step 5/7. Its pathway is metabolic intermediate biosynthesis; chorismate biosynthesis; chorismate from D-erythrose 4-phosphate and phosphoenolpyruvate: step 6/7. Functionally, the AROM polypeptide catalyzes 5 consecutive enzymatic reactions in prechorismate polyaromatic amino acid biosynthesis. The protein is Pentafunctional AROM polypeptide of Scheffersomyces stipitis (strain ATCC 58785 / CBS 6054 / NBRC 10063 / NRRL Y-11545) (Yeast).